A 662-amino-acid chain; its full sequence is Glycogen debranching enzyme (662 aa).

The Nucleophile role is filled by Asp338. Glu373 serves as the catalytic Proton donor.

It belongs to the glycosyl hydrolase 13 family.

It catalyses the reaction Hydrolysis of (1-&gt;6)-alpha-D-glucosidic linkages to branches with degrees of polymerization of three or four glucose residues in limit dextrin.. It functions in the pathway glycan degradation; glycogen degradation. Functionally, removes maltotriose and maltotetraose chains that are attached by 1,6-alpha-linkage to the limit dextrin main chain, generating a debranched limit dextrin. The protein is Glycogen debranching enzyme of Yersinia pestis.